A 208-amino-acid chain; its full sequence is Uridine kinase (208 aa).

Gly-11 to Ser-18 contributes to the ATP binding site.

The protein belongs to the uridine kinase family.

The protein resides in the cytoplasm. The enzyme catalyses uridine + ATP = UMP + ADP + H(+). The catalysed reaction is cytidine + ATP = CMP + ADP + H(+). Its pathway is pyrimidine metabolism; CTP biosynthesis via salvage pathway; CTP from cytidine: step 1/3. It functions in the pathway pyrimidine metabolism; UMP biosynthesis via salvage pathway; UMP from uridine: step 1/1. This is Uridine kinase from Clostridium perfringens (strain SM101 / Type A).